Consider the following 618-residue polypeptide: F-box/LRR-repeat protein At3g58940 (618 aa).

The 47-residue stretch at 1-47 folds into the F-box domain; it reads MDRVSNLPEEVRCHILSFLPTKHAALTSVLSKSWLNLWKFETNLDID. LRR repeat units follow at residues 147–176, 196–223, 224–249, 282–313, 314–339, and 354–379; these read LKLRSEHCVNWWHWDIGASLPNLKSLNIDS, EVHMANMEWRELDETMSSASLTKLSIHG, TGVEEFEHPKSISIDTPNLLYLNYSD, TLYLTEDTLEVLTMCCESMPVFNNLKTLGLKS, DEGRGWQAVPALLRNCPHLEFLIIEG, and CISREDKGRSLISCPVKKLEVRGFRG. The segment at 587-618 is disordered; it reads ATDSERAETSSNQEMTELGQATATYFPPREGE. The span at 595-609 shows a compositional bias: polar residues; it reads TSSNQEMTELGQATA.

The chain is F-box/LRR-repeat protein At3g58940 from Arabidopsis thaliana (Mouse-ear cress).